The following is a 228-amino-acid chain: 2-C-methyl-D-erythritol 4-phosphate cytidylyltransferase (228 aa).

The protein belongs to the IspD/TarI cytidylyltransferase family. IspD subfamily.

It carries out the reaction 2-C-methyl-D-erythritol 4-phosphate + CTP + H(+) = 4-CDP-2-C-methyl-D-erythritol + diphosphate. It participates in isoprenoid biosynthesis; isopentenyl diphosphate biosynthesis via DXP pathway; isopentenyl diphosphate from 1-deoxy-D-xylulose 5-phosphate: step 2/6. Functionally, catalyzes the formation of 4-diphosphocytidyl-2-C-methyl-D-erythritol from CTP and 2-C-methyl-D-erythritol 4-phosphate (MEP). The sequence is that of 2-C-methyl-D-erythritol 4-phosphate cytidylyltransferase from Actinobacillus pleuropneumoniae serotype 5b (strain L20).